Consider the following 199-residue polypeptide: Probable GTP-binding protein EngB (199 aa).

The region spanning 28 to 199 (DLPEIALAGR…DSWDAILEQV (172 aa)) is the EngB-type G domain. GTP-binding positions include 36–43 (GRSNVGKS), 63–67 (GKTQL), 81–84 (DVPG), 148–151 (TKAD), and 180–182 (FSS). 2 residues coordinate Mg(2+): Ser-43 and Thr-65.

This sequence belongs to the TRAFAC class TrmE-Era-EngA-EngB-Septin-like GTPase superfamily. EngB GTPase family. It depends on Mg(2+) as a cofactor.

In terms of biological role, necessary for normal cell division and for the maintenance of normal septation. In Streptococcus pyogenes serotype M49 (strain NZ131), this protein is Probable GTP-binding protein EngB.